The sequence spans 424 residues: Glutamate-1-semialdehyde 2,1-aminomutase (424 aa).

At K263 the chain carries N6-(pyridoxal phosphate)lysine.

This sequence belongs to the class-III pyridoxal-phosphate-dependent aminotransferase family. HemL subfamily. Homodimer. It depends on pyridoxal 5'-phosphate as a cofactor.

Its subcellular location is the cytoplasm. It carries out the reaction (S)-4-amino-5-oxopentanoate = 5-aminolevulinate. The protein operates within porphyrin-containing compound metabolism; protoporphyrin-IX biosynthesis; 5-aminolevulinate from L-glutamyl-tRNA(Glu): step 2/2. The polypeptide is Glutamate-1-semialdehyde 2,1-aminomutase (Campylobacter jejuni subsp. jejuni serotype O:6 (strain 81116 / NCTC 11828)).